Here is a 98-residue protein sequence, read N- to C-terminus: uncharacterized protein (98 aa).

This is an uncharacterized protein from Methanocaldococcus jannaschii (strain ATCC 43067 / DSM 2661 / JAL-1 / JCM 10045 / NBRC 100440) (Methanococcus jannaschii).